A 550-amino-acid chain; its full sequence is Dihydroxy-acid dehydratase (550 aa).

Position 78 (D78) interacts with Mg(2+). Position 119 (C119) interacts with [2Fe-2S] cluster. The Mg(2+) site is built by D120 and K121. K121 bears the N6-carboxylysine mark. Position 191 (C191) interacts with [2Fe-2S] cluster. E440 is a binding site for Mg(2+). Catalysis depends on S466, which acts as the Proton acceptor.

This sequence belongs to the IlvD/Edd family. As to quaternary structure, homodimer. [2Fe-2S] cluster is required as a cofactor. The cofactor is Mg(2+).

The catalysed reaction is (2R)-2,3-dihydroxy-3-methylbutanoate = 3-methyl-2-oxobutanoate + H2O. The enzyme catalyses (2R,3R)-2,3-dihydroxy-3-methylpentanoate = (S)-3-methyl-2-oxopentanoate + H2O. It functions in the pathway amino-acid biosynthesis; L-isoleucine biosynthesis; L-isoleucine from 2-oxobutanoate: step 3/4. Its pathway is amino-acid biosynthesis; L-valine biosynthesis; L-valine from pyruvate: step 3/4. Functions in the biosynthesis of branched-chain amino acids. Catalyzes the dehydration of (2R,3R)-2,3-dihydroxy-3-methylpentanoate (2,3-dihydroxy-3-methylvalerate) into 2-oxo-3-methylpentanoate (2-oxo-3-methylvalerate) and of (2R)-2,3-dihydroxy-3-methylbutanoate (2,3-dihydroxyisovalerate) into 2-oxo-3-methylbutanoate (2-oxoisovalerate), the penultimate precursor to L-isoleucine and L-valine, respectively. The polypeptide is Dihydroxy-acid dehydratase (Methanococcus aeolicus (strain ATCC BAA-1280 / DSM 17508 / OCM 812 / Nankai-3)).